The chain runs to 303 residues: Probable cell division protein WhiA (303 aa).

Positions 272–303 (SIQQLADSLSTPLTKSGVNHRLRKINKIADEL) form a DNA-binding region, H-T-H motif.

The protein belongs to the WhiA family.

Its function is as follows. Involved in cell division and chromosome segregation. This chain is Probable cell division protein WhiA, found in Streptococcus pneumoniae (strain ATCC 700669 / Spain 23F-1).